The sequence spans 166 residues: SUMO-conjugating enzyme UBC9 (166 aa).

Residues 4–157 (IAAGRLAEER…VKKEAVKYAA (154 aa)) form the UBC core domain. Residue Cys93 is the Glycyl thioester intermediate of the active site.

The protein belongs to the ubiquitin-conjugating enzyme family. In terms of assembly, interacts with brd-1 and rad-51. Interacts with smo-1 and sop-2. Interacts with bet-1 (via BROMO domain 2). Interacts with isoforms 1 and 2 of X-box-binding protein xbp-1.

The protein resides in the nucleus envelope. It participates in protein modification; protein sumoylation. Its function is as follows. Accepts the ubiquitin-like protein smo-1 from the aos-1-uba-2 E1 complex and catalyzes its covalent attachment to other proteins with the help of an E3 ligase such as gei-17. Required to sumoylate the ETS transcription factor lin-1, Polycomb protein sop-2, and intermediate filament proteins, such as ifb-1. Required for embryonic development, fertility, vulval morphogenesis, inhibition of vulval cell fates, lifespan, and neuromuscular activity. The polypeptide is SUMO-conjugating enzyme UBC9 (Caenorhabditis elegans).